Reading from the N-terminus, the 85-residue chain is Turmerin (85 aa).

In terms of processing, the N-terminus is blocked.

Functionally, inhibition of trypsin. Has anticarcinogenic activity, prevents transformation of DMBA-treated JB6 cells. Has antipromoter activity, prevents promotion by tetradecanoyl phorbal acetate (TPA) in JB6 cells. Prevents tertiary butyl hydroperoxide-induced mutagenesis. Protects AT base pairs and shows antimutagenesis activity in TA102 and TA104 S.typhimurium mutagenesis tests. Inhibits paw edema formation induced by phospholipase A2 in Swiss Wistar mice. Prevents the release of arachidonate, the parent compound for the synthesis of prostaglandins and prostacyclins. Has antimalarial activity, kills P.falciparum. Has antivenom activity, nullifies the lethal effects of N.naja venom and inhibits phospholipase A2 present in N.naja venom. Has antifungal activity, inhibits cilia formation by A.niger. Is not toxic or allergenic. The protein is Turmerin of Curcuma longa (Turmeric).